The chain runs to 1296 residues: Phosphoribosylformylglycinamidine synthase (1296 aa).

Positions 304–323 are disordered; that stretch reads WPGAATGSGGEIRDEGATGR. Residues 306–317 and Ala-677 each bind ATP; that span reads GAATGSGGEIRD. Asp-678, Glu-717, Asn-721, and Asp-885 together coordinate Mg(2+). Residue Ser-887 participates in ATP binding. Residues 1000–1013 show a composition bias toward basic and acidic residues; it reads PDCADQEHQAKQDE. Residues 1000 to 1019 form a disordered region; sequence PDCADQEHQAKQDESDPGLN. The region spanning 1043-1296 is the Glutamine amidotransferase type-1 domain; sequence VAVLREQGVN…MFRNARKQLG (254 aa). The active-site Nucleophile is Cys-1136. Active-site residues include His-1261 and Glu-1263.

The protein in the N-terminal section; belongs to the FGAMS family. In terms of assembly, monomer.

The protein localises to the cytoplasm. It carries out the reaction N(2)-formyl-N(1)-(5-phospho-beta-D-ribosyl)glycinamide + L-glutamine + ATP + H2O = 2-formamido-N(1)-(5-O-phospho-beta-D-ribosyl)acetamidine + L-glutamate + ADP + phosphate + H(+). It functions in the pathway purine metabolism; IMP biosynthesis via de novo pathway; 5-amino-1-(5-phospho-D-ribosyl)imidazole from N(2)-formyl-N(1)-(5-phospho-D-ribosyl)glycinamide: step 1/2. Functionally, phosphoribosylformylglycinamidine synthase involved in the purines biosynthetic pathway. Catalyzes the ATP-dependent conversion of formylglycinamide ribonucleotide (FGAR) and glutamine to yield formylglycinamidine ribonucleotide (FGAM) and glutamate. The protein is Phosphoribosylformylglycinamidine synthase of Yersinia pestis bv. Antiqua (strain Nepal516).